The primary structure comprises 205 residues: Cryptic plasmid protein C (205 aa).

Residues 142–205 (THGYSDPDDP…RAGNAGKGRF (64 aa)) form a disordered region. Positions 155-174 (QSMTQAKDLPRNTQEAAQSI) are enriched in polar residues. Residues 189–205 (QAKKPRRRAGNAGKGRF) show a composition bias toward basic residues.

The polypeptide is Cryptic plasmid protein C (cppC) (Neisseria gonorrhoeae).